A 431-amino-acid chain; its full sequence is Enolase (431 aa).

Gln-163 lines the (2R)-2-phosphoglycerate pocket. Glu-205 serves as the catalytic Proton donor. 3 residues coordinate Mg(2+): Asp-242, Glu-288, and Asp-315. Residues Lys-340, Arg-369, Ser-370, and Lys-391 each contribute to the (2R)-2-phosphoglycerate site. The active-site Proton acceptor is the Lys-340.

This sequence belongs to the enolase family. It depends on Mg(2+) as a cofactor.

It is found in the cytoplasm. The protein localises to the secreted. It localises to the cell surface. It catalyses the reaction (2R)-2-phosphoglycerate = phosphoenolpyruvate + H2O. The protein operates within carbohydrate degradation; glycolysis; pyruvate from D-glyceraldehyde 3-phosphate: step 4/5. Its function is as follows. Catalyzes the reversible conversion of 2-phosphoglycerate (2-PG) into phosphoenolpyruvate (PEP). It is essential for the degradation of carbohydrates via glycolysis. The sequence is that of Enolase from Bacillus mycoides (strain KBAB4) (Bacillus weihenstephanensis).